Here is a 483-residue protein sequence, read N- to C-terminus: NADH-quinone oxidoreductase subunit N (483 aa).

A run of 13 helical transmembrane segments spans residues 7 to 27 (AILT…LGAV), 33 to 53 (ALAS…AFYI), 76 to 96 (FAKI…QDYM), 108 to 128 (VLII…DLIA), 161 to 181 (FVLG…AYGF), 196 to 216 (GGDM…GLAF), 235 to 255 (PTPI…ALFA), 272 to 292 (IVAF…IGQT), 297 to 317 (LMAY…SAGT), 323 to 343 (AMLI…AFIL), 369 to 389 (ALAI…LGFF), 402 to 422 (GLVW…FYYI), and 442 to 462 (MGLV…LGWV).

The protein belongs to the complex I subunit 2 family. As to quaternary structure, NDH-1 is composed of 14 different subunits. Subunits NuoA, H, J, K, L, M, N constitute the membrane sector of the complex.

The protein localises to the cell inner membrane. It carries out the reaction a quinone + NADH + 5 H(+)(in) = a quinol + NAD(+) + 4 H(+)(out). In terms of biological role, NDH-1 shuttles electrons from NADH, via FMN and iron-sulfur (Fe-S) centers, to quinones in the respiratory chain. The immediate electron acceptor for the enzyme in this species is believed to be ubiquinone. Couples the redox reaction to proton translocation (for every two electrons transferred, four hydrogen ions are translocated across the cytoplasmic membrane), and thus conserves the redox energy in a proton gradient. This chain is NADH-quinone oxidoreductase subunit N, found in Jannaschia sp. (strain CCS1).